A 348-amino-acid polypeptide reads, in one-letter code: MGYKISIDAMGGDHGLNTTIPAALEAVKKDSNLQIVLVGDHHKVKRALDRYSKVKKIKLPVLQRIAIHHASETVGMDESPSIAVRKKKDSSMRVAINLVKDRTVDACVSAGNTGALMATSKFVLKTINGVDRPAIVYALPAFNRETKQLSKTYMLDLGANVVCTSEQLFQFAIMGSILAASSKGIAEPRVSLLNIGEEEMKGLDNIKNAAKLLQGCDFINYNGYIEGKYIFDDTTDVIVCDGFVGNVSLKTMEGSLRLIESLIKKTIQESSLLMKIPIVMALPIFKKMKKGMNLDSFNGASLLGLTGIVVKSHGGASANAFETAIYEAIKEIKYNIPKTIQESLEKVL.

Belongs to the PlsX family. As to quaternary structure, homodimer. Probably interacts with PlsY.

It localises to the cytoplasm. It carries out the reaction a fatty acyl-[ACP] + phosphate = an acyl phosphate + holo-[ACP]. The protein operates within lipid metabolism; phospholipid metabolism. Functionally, catalyzes the reversible formation of acyl-phosphate (acyl-PO(4)) from acyl-[acyl-carrier-protein] (acyl-ACP). This enzyme utilizes acyl-ACP as fatty acyl donor, but not acyl-CoA. The sequence is that of Phosphate acyltransferase from Francisella tularensis subsp. novicida (strain U112).